We begin with the raw amino-acid sequence, 138 residues long: Thyrotropin subunit beta (138 aa).

The N-terminal stretch at 1-20 (MTALFLMSMLFGLTCGQAMS) is a signal peptide. Disulfide bonds link C22–C72, C36–C87, C39–C125, C47–C103, C51–C105, and C108–C115. N43 is a glycosylation site (N-linked (GlcNAc...) asparagine). Positions 133 to 138 (LVGFSV) are excised as a propeptide.

Belongs to the glycoprotein hormones subunit beta family. As to quaternary structure, heterodimer of a common alpha chain and a unique beta chain which confers biological specificity to thyrotropin, lutropin, follitropin and gonadotropin.

The protein localises to the secreted. Its function is as follows. Indispensable for the control of thyroid structure and metabolism. This chain is Thyrotropin subunit beta (TSHB), found in Homo sapiens (Human).